A 236-amino-acid polypeptide reads, in one-letter code: Phosphoribosylaminoimidazole-succinocarboxamide synthase (236 aa).

It belongs to the SAICAR synthetase family.

It catalyses the reaction 5-amino-1-(5-phospho-D-ribosyl)imidazole-4-carboxylate + L-aspartate + ATP = (2S)-2-[5-amino-1-(5-phospho-beta-D-ribosyl)imidazole-4-carboxamido]succinate + ADP + phosphate + 2 H(+). It participates in purine metabolism; IMP biosynthesis via de novo pathway; 5-amino-1-(5-phospho-D-ribosyl)imidazole-4-carboxamide from 5-amino-1-(5-phospho-D-ribosyl)imidazole-4-carboxylate: step 1/2. This chain is Phosphoribosylaminoimidazole-succinocarboxamide synthase, found in Campylobacter jejuni subsp. doylei (strain ATCC BAA-1458 / RM4099 / 269.97).